The sequence spans 212 residues: Ribonuclease HII (212 aa).

Positions 4 to 206 (EVQCGIDEAG…YKKIKEDVES (203 aa)) constitute an RNase H type-2 domain. Residues Asp10, Glu11, and Asp103 each coordinate a divalent metal cation.

It belongs to the RNase HII family. Mn(2+) serves as cofactor. It depends on Mg(2+) as a cofactor.

It is found in the cytoplasm. The catalysed reaction is Endonucleolytic cleavage to 5'-phosphomonoester.. In terms of biological role, endonuclease that specifically degrades the RNA of RNA-DNA hybrids. The polypeptide is Ribonuclease HII (Thermoplasma volcanium (strain ATCC 51530 / DSM 4299 / JCM 9571 / NBRC 15438 / GSS1)).